Consider the following 1537-residue polypeptide: DNA-directed RNA polymerase subunit beta' (1537 aa).

Zn(2+) contacts are provided by Cys-57, Cys-59, Cys-72, and Cys-75. Residues Asp-746, Asp-748, and Asp-750 each coordinate Mg(2+). Zn(2+) is bound by residues Cys-1120, Cys-1201, Cys-1208, and Cys-1211. The interval 1502 to 1537 (LEKYGQTSVSTDAVTGSQRYDDTRPSSTSINPSYGD) is disordered. Composition is skewed to polar residues over residues 1506-1519 (GQTS…TGSQ) and 1526-1537 (PSSTSINPSYGD).

It belongs to the RNA polymerase beta' chain family. As to quaternary structure, the RNAP catalytic core consists of 2 alpha, 1 beta, 1 beta' and 1 omega subunit. When a sigma factor is associated with the core the holoenzyme is formed, which can initiate transcription. Mg(2+) is required as a cofactor. Zn(2+) serves as cofactor.

It carries out the reaction RNA(n) + a ribonucleoside 5'-triphosphate = RNA(n+1) + diphosphate. Its function is as follows. DNA-dependent RNA polymerase catalyzes the transcription of DNA into RNA using the four ribonucleoside triphosphates as substrates. The chain is DNA-directed RNA polymerase subunit beta' from Deinococcus geothermalis (strain DSM 11300 / CIP 105573 / AG-3a).